Reading from the N-terminus, the 126-residue chain is Heterotrimeric G protein gamma subunit GPG1 (126 aa).

In terms of assembly, g proteins are composed of 3 units, alpha, beta and gamma. GPG1 interacts with the beta subunits GBP1 and GPB2.

The protein resides in the cytoplasm. Functionally, gamma subunit of a guanine nucleotide-binding protein (G protein). G proteins are involved as modulators or transducers in various transmembrane signaling systems. The beta and gamma chains are required for the GTPase activity, for replacement of GDP by GTP, and for G protein-effector interaction. Involved in the determination of the cAMP level according to nutritional conditions, most probably as a regulator of cAMP phosphodiesterase. Required for the control of pseudohyphal and haploid invasive growth. The polypeptide is Heterotrimeric G protein gamma subunit GPG1 (GPG1) (Saccharomyces cerevisiae (strain ATCC 204508 / S288c) (Baker's yeast)).